We begin with the raw amino-acid sequence, 458 residues long: Sphingomyelinase DDB_G0288017 (458 aa).

Residues 91-111 (NKKAKSPPPPSSLKQQNLHNN) are disordered. Glutamate 135 contacts Mg(2+). Histidine 447 acts as the Proton acceptor in catalysis.

It belongs to the neutral sphingomyelinase family. Mg(2+) is required as a cofactor.

It carries out the reaction a sphingomyelin + H2O = phosphocholine + an N-acylsphing-4-enine + H(+). It functions in the pathway lipid metabolism; sphingolipid metabolism. Its function is as follows. Catalyzes the hydrolysis of sphingomyelin to form ceramide and phosphocholine. The protein is Sphingomyelinase DDB_G0288017 of Dictyostelium discoideum (Social amoeba).